The following is a 576-amino-acid chain: Ecdysone receptor (576 aa).

Positions 1–162 (MSLGARGYRR…GPAPRQQEEL (162 aa)) are modulating. The segment at 87 to 154 (CTMEQQQPQP…GEARRQKKGP (68 aa)) is disordered. The segment covering 91 to 106 (QQQPQPQQQPQQTQPL) has biased composition (low complexity). The span at 107-117 (PSMPLPMPPTT) shows a compositional bias: pro residues. NR C4-type zinc fingers lie at residues 163–183 (CLVC…CEGC) and 199–223 (CKFG…LKKC). A DNA-binding region (nuclear receptor) is located at residues 163–235 (CLVCGDRASG…VGMRPECVVP (73 aa)). The tract at residues 245–269 (EKKAQREKDKLPVSTTTVDDHMPPI) is disordered. In terms of domain architecture, NR LBD spans 314–548 (NQKSLIARLV…FLEEIWDVAD (235 aa)).

This sequence belongs to the nuclear hormone receptor family. NR1 subfamily.

It is found in the nucleus. Receptor for ecdysone. Binds to ecdysone response elements (ECRES). The protein is Ecdysone receptor (EcR) of Heliothis virescens (Tobacco budworm moth).